The chain runs to 770 residues: MDLEAAHGAAAAPGKRRRRARESWGASLLLAYQSLGVVYGDVATSPLYVYKSAFAGDDIQHSAGNEEIYGVLSFVFWTLTLISLVKYVLIVLRADDGGEGGTFALYSLICRHVRAGLLPGGAGDELAVGGRRDARAMSRLRAMLERYRVLQRLLLLFALLGTCMVIGDGVLTPAVSVYSAVSGLELSMEHEHHKYVQLPVTCAILIGLFALQHYGTHRVGFIFAPIVCVWLLCISAIGVYNIVHWNHHVYRALSPYYMYQFLKKTQTGGWMSLGGILLCVTGSEAMYADLGHFSQSSIKIAFMSVVYPALVLAYMGQAAYISQHHSFENAYHIGFYVSVPEKLRWPVLVIAILAAVVGSQAVITGTFSIIKQCSSLSCFPGVKIVHTSSTVHGQIYIPEINWILMILCLAVTLGFRNTKHLANAQGLAVITVMLVTTCLMSLVIVLCWNKSIFLALGFLIFFGTIEVLYFSASLVKFHEGAWVPITLSFIFMIVMCVWHYGTIKKYEFDFQNKVSVNWLLNLGPSLGIVRVRGIGLIHTELVSGIPAIFSHFVTNLPAFHQVLVFLCVKSVPVPHVQPEERFLVGRIGPKEYRLYRVIVRYGYRDVQKDDIEFEKDLVSSIAEFIRSGDSHHNGVLEDTDKSCEKLSSISNGIPLWMEDGEVDASASPHKETDTQIISPNRKKARFVLPKNAQVDSEVRRELQELMDAREAGMSFILGHSYMKAKSGSSFIKRIVINFFYEFLRRNSRGPSYAATIPHASTLEVGMVYQV.

At 1-23 (MDLEAAHGAAAAPGKRRRRARES) the chain is on the cytoplasmic side. A helical transmembrane segment spans residues 24-44 (WGASLLLAYQSLGVVYGDVAT). Residues 45–70 (SPLYVYKSAFAGDDIQHSAGNEEIYG) lie on the Extracellular side of the membrane. Residues 71-91 (VLSFVFWTLTLISLVKYVLIV) traverse the membrane as a helical segment. Over 92 to 152 (LRADDGGEGG…MLERYRVLQR (61 aa)) the chain is Cytoplasmic. Residues 153–173 (LLLLFALLGTCMVIGDGVLTP) traverse the membrane as a helical segment. The Extracellular portion of the chain corresponds to 174–194 (AVSVYSAVSGLELSMEHEHHK). Residues 195-215 (YVQLPVTCAILIGLFALQHYG) form a helical membrane-spanning segment. Residues 216-218 (THR) are Cytoplasmic-facing. Residues 219-239 (VGFIFAPIVCVWLLCISAIGV) form a helical membrane-spanning segment. The Extracellular segment spans residues 240–267 (YNIVHWNHHVYRALSPYYMYQFLKKTQT). Residues 268-288 (GGWMSLGGILLCVTGSEAMYA) form a helical membrane-spanning segment. Residues 289–299 (DLGHFSQSSIK) are Cytoplasmic-facing. The helical transmembrane segment at 300-320 (IAFMSVVYPALVLAYMGQAAY) threads the bilayer. The Extracellular portion of the chain corresponds to 321–346 (ISQHHSFENAYHIGFYVSVPEKLRWP). Residues 347–367 (VLVIAILAAVVGSQAVITGTF) traverse the membrane as a helical segment. Over 368-394 (SIIKQCSSLSCFPGVKIVHTSSTVHGQ) the chain is Cytoplasmic. The helical transmembrane segment at 395-415 (IYIPEINWILMILCLAVTLGF) threads the bilayer. Residues 416 to 425 (RNTKHLANAQ) are Extracellular-facing. Residues 426-446 (GLAVITVMLVTTCLMSLVIVL) form a helical membrane-spanning segment. Over 447–451 (CWNKS) the chain is Cytoplasmic. Residues 452 to 472 (IFLALGFLIFFGTIEVLYFSA) traverse the membrane as a helical segment. Residues 473–479 (SLVKFHE) lie on the Extracellular side of the membrane. The helical transmembrane segment at 480–500 (GAWVPITLSFIFMIVMCVWHY) threads the bilayer. Topologically, residues 501-770 (GTIKKYEFDF…TLEVGMVYQV (270 aa)) are cytoplasmic.

The protein belongs to the HAK/KUP transporter (TC 2.A.72.3) family.

The protein localises to the membrane. Its function is as follows. High-affinity potassium transporter. The polypeptide is Potassium transporter 25 (HAK25) (Oryza sativa subsp. japonica (Rice)).